The following is a 645-amino-acid chain: UPF0313 protein CLB_0243 (645 aa).

A Radical SAM core domain is found at 295 to 566 (AIKEVKFSIT…RMQRALLQFS (272 aa)). [4Fe-4S] cluster-binding residues include cysteine 309, cysteine 313, and cysteine 316. The disordered stretch occupies residues 598 to 645 (NKPYKKSHKKNNAKNNNNHYNKNNNYNKNKDISKKNKKNSLSKHKKRK). Positions 600 to 609 (PYKKSHKKNN) are enriched in basic residues. Low complexity predominate over residues 610–624 (AKNNNNHYNKNNNYN). Residues 632-645 (KNKKNSLSKHKKRK) are compositionally biased toward basic residues.

It belongs to the UPF0313 family. It depends on [4Fe-4S] cluster as a cofactor.

In Clostridium botulinum (strain ATCC 19397 / Type A), this protein is UPF0313 protein CLB_0243.